A 375-amino-acid chain; its full sequence is MDAIHLGMSSAPLVKHTNGVGLKAHRPRVMSKSGHSNVRIDKVDGIYLLYLQDLWTTVIDMKWRYKLTLFAATFVMTWFLFGVVYYAIAFIHGDLQLGESNSNHTPCIMKVDSLTGAFLFSLESQTTIGYGVRSITEECPHAIFLLVAQLVITTLIEIFITGTFLAKIARPKKRAETIKFSHCAVISKQNGKLCLVIQVANMRKSLLIQCQLSGKLLQTHVTKEGERILLNQATVKFHVDSSSESPFLILPMTFYHVLDETSPLRDLTPQNLKEKEFELVVLLNATVESTSAVCQSRTSYIPEEIYWGFEFVPVVSLSKNGKYVADFSQFEQIRKSPDCTFYCADSEKQKLEEQYRQEDQRERELRSLLLQQSNV.

The Cytoplasmic portion of the chain corresponds to 1-60; the sequence is MDAIHLGMSSAPLVKHTNGVGLKAHRPRVMSKSGHSNVRIDKVDGIYLLYLQDLWTTVID. A helical transmembrane segment spans residues 61 to 87; it reads MKWRYKLTLFAATFVMTWFLFGVVYYA. Over 88-113 the chain is Extracellular; it reads IAFIHGDLQLGESNSNHTPCIMKVDS. The segment at residues 114–130 is an intramembrane region (helical; Pore-forming); that stretch reads LTGAFLFSLESQTTIGY. A Selectivity filter motif is present at residues 127–132; that stretch reads TIGYGV. Residues 131 to 139 are Extracellular-facing; sequence GVRSITEEC. Residues 140-165 traverse the membrane as a helical segment; it reads PHAIFLLVAQLVITTLIEIFITGTFL. Topologically, residues 166–375 are cytoplasmic; it reads AKIARPKKRA…RSLLLQQSNV (210 aa).

It belongs to the inward rectifier-type potassium channel (TC 1.A.2.1) family. KCNJ15 subfamily. In terms of assembly, can form heteromultimeric channels with Kir5.1/KCNJ16. Interacts with PATJ. Expressed in the proximal segment of the nephron.

Its subcellular location is the membrane. The protein localises to the cell membrane. The enzyme catalyses K(+)(in) = K(+)(out). Its activity is regulated as follows. Channel activity is regulated by variations of cytosolic pH; reversibly inhibited by acidic pH values. Inhibited by Ba(2+) and Cs(+) in a voltage-dependent manner. In terms of biological role, inward rectifier potassium channels are characterized by a greater tendency to allow potassium to flow into the cell rather than out of it. Their voltage dependence is regulated by the concentration of extracellular potassium; as external potassium is raised, the voltage range of the channel opening shifts to more positive voltages. The inward rectification is mainly due to the blockage of outward current by internal magnesium. The polypeptide is ATP-sensitive inward rectifier potassium channel 15 (Kcnj15) (Mus musculus (Mouse)).